We begin with the raw amino-acid sequence, 582 residues long: Vesicular glutamate transporter 2 (582 aa).

Over 1–71 the chain is Cytoplasmic; it reads MESVKQRILA…CTCFGLPRRY (71 aa). Residues 72–92 form a helical membrane-spanning segment; sequence IIAIMSGLGFCISFGIRCNLG. Topologically, residues 93 to 125 are vesicular; sequence VAIVDMVNNSTIHRGGKVIKEKAKFNWDPETVG. N-linked (GlcNAc...) asparagine glycosylation is found at N100 and N101. The helical transmembrane segment at 126-146 threads the bilayer; it reads MIHGSFFWGYIITQIPGGYIA. Over 147–148 the chain is Cytoplasmic; it reads SR. Residues 149–169 traverse the membrane as a helical segment; sequence LAANRVFGAAILLTSTLNMLI. Topologically, residues 170–177 are vesicular; that stretch reads PSAARVHY. The helical transmembrane segment at 178–198 threads the bilayer; it reads GCVIFVRILQGLVEGVTYPAC. Residues 199-216 lie on the Cytoplasmic side of the membrane; it reads HGIWSKWAPPLERSRLAT. A helical transmembrane segment spans residues 217 to 237; sequence TSFCGSYAGAVIAMPLAGILV. Residues 238 to 244 lie on the Vesicular side of the membrane; sequence QYTGWSS. A helical transmembrane segment spans residues 245-265; the sequence is VFYVYGSFGMVWYMFWLLVSY. Over 266–310 the chain is Cytoplasmic; it reads ESPAKHPTITDEERRYIEESIGESANLLGAMEKFKTPWRKFFTSM. The helical transmembrane segment at 311-331 threads the bilayer; the sequence is PVYAIIVANFCRSWTFYLLLI. The Vesicular segment spans residues 332–349; that stretch reads SQPAYFEEVFGFEISKVG. Residues 350-370 traverse the membrane as a helical segment; the sequence is MLSAVPHLVMTIIVPIGGQIA. Over 371-386 the chain is Cytoplasmic; the sequence is DFLRSKQILSTTTVRK. The helical transmembrane segment at 387-407 threads the bilayer; sequence IMNCGGFGMEATLLLVVGYSH. Residues 408–409 are Vesicular-facing; the sequence is TR. A helical membrane pass occupies residues 410-430; the sequence is GVAISFLVLAVGFSGFAISGF. Residues 431-443 lie on the Cytoplasmic side of the membrane; it reads NVNHLDIAPRYAS. The helical transmembrane segment at 444–464 threads the bilayer; sequence ILMGISNGVGTLSGMVCPIIV. The Vesicular segment spans residues 465 to 477; the sequence is GAMTKNKSREEWQ. A glycan (N-linked (GlcNAc...) asparagine) is linked at N470. The chain crosses the membrane as a helical span at residues 478–498; sequence YVFLIAALVHYGGVIFYAIFA. Residues 499–582 lie on the Cytoplasmic side of the membrane; sequence SGEKQPWADP…HSYKDRVDYS (84 aa).

This sequence belongs to the major facilitator superfamily. Sodium/anion cotransporter family. VGLUT subfamily. As to expression, predominantly expressed in adult brain. Expressed in amygdala, caudate nucleus, cerebral cortex, frontal lobe, hippocampus, medulla, occipital lobe, putamen, spinal cord, substantia nigra, subthalamic nucleus, temporal lobe and thalamus.

Its subcellular location is the cytoplasmic vesicle. It localises to the secretory vesicle. The protein resides in the synaptic vesicle membrane. It is found in the synapse. The protein localises to the synaptosome. Its subcellular location is the cell membrane. It catalyses the reaction L-glutamate(out) = L-glutamate(in). The enzyme catalyses 3 Na(+)(out) + phosphate(out) = 3 Na(+)(in) + phosphate(in). The catalysed reaction is phosphate(in) = phosphate(out). It carries out the reaction K(+)(in) + H(+)(out) = K(+)(out) + H(+)(in). It catalyses the reaction chloride(in) = chloride(out). Its activity is regulated as follows. Chloride channel activity is allosterically activated by lumenal H(+) and Cl(-) leading to synaptic vesicles acidification. The L-glutamate transport activity is allosterically activated by lumenal H(+) and Cl(-). The allosteric requirement for H(+) efficiently prevents non-vesicular efflux across the plasma membrane. The L-glutamate uniporter activity exhibits a biphasic dependence on chloride concentration. Its function is as follows. Multifunctional transporter that transports L-glutamate as well as multiple ions such as chloride, proton, potassium, sodium and phosphate. At the synaptic vesicle membrane, mainly functions as a uniporter which transports preferentially L-glutamate but also, phosphate from the cytoplasm into synaptic vesicles at presynaptic nerve terminals of excitatory neural cells. The L-glutamate or phosphate uniporter activity is electrogenic and is driven by the proton electrochemical gradient, mainly by the electrical gradient established by the vacuolar H(+)-ATPase across the synaptic vesicle membrane. In addition, functions as a chloride channel that allows the chloride permeation through the synaptic vesicle membrane therefore affects the proton electrochemical gradient and promotes synaptic vesicles acidification. Moreover, functions as a vesicular K(+)/H(+) antiport allowing to maintain the electrical gradient and to decrease chemical gradient and therefore sustain vesicular glutamate uptake. The vesicular H(+)/H(+) antiport activity is electroneutral. At the plasma membrane, following exocytosis, functions as a symporter of Na(+) and phosphate from the extracellular space to the cytoplasm allowing synaptic phosphate homeostasis regulation. The symporter activity is driven by an inside negative membrane potential and is electrogenic. Also involved in the regulation of retinal hyaloid vessel regression during postnatal development. May also play a role in the endocrine glutamatergic system of other tissues such as pineal gland and pancreas. The polypeptide is Vesicular glutamate transporter 2 (Homo sapiens (Human)).